A 422-amino-acid chain; its full sequence is UDP-N-acetylglucosamine 1-carboxyvinyltransferase 2 (422 aa).

22 to 23 contributes to the phosphoenolpyruvate binding site; sequence KN. Arg93 is a binding site for UDP-N-acetyl-alpha-D-glucosamine. The active-site Proton donor is Cys117. Cys117 carries the 2-(S-cysteinyl)pyruvic acid O-phosphothioketal modification. Residues 122-126, Asp308, and Ile330 each bind UDP-N-acetyl-alpha-D-glucosamine; that span reads RPVDL.

The protein belongs to the EPSP synthase family. MurA subfamily.

It is found in the cytoplasm. It catalyses the reaction phosphoenolpyruvate + UDP-N-acetyl-alpha-D-glucosamine = UDP-N-acetyl-3-O-(1-carboxyvinyl)-alpha-D-glucosamine + phosphate. It functions in the pathway cell wall biogenesis; peptidoglycan biosynthesis. In terms of biological role, cell wall formation. Adds enolpyruvyl to UDP-N-acetylglucosamine. This is UDP-N-acetylglucosamine 1-carboxyvinyltransferase 2 from Legionella pneumophila (strain Lens).